The primary structure comprises 296 residues: 4-hydroxy-tetrahydrodipicolinate synthase (296 aa).

Thr47 serves as a coordination point for pyruvate. Tyr135 (proton donor/acceptor) is an active-site residue. The active-site Schiff-base intermediate with substrate is Lys164. Ile207 contacts pyruvate.

The protein belongs to the DapA family. In terms of assembly, homotetramer; dimer of dimers.

The protein resides in the cytoplasm. The catalysed reaction is L-aspartate 4-semialdehyde + pyruvate = (2S,4S)-4-hydroxy-2,3,4,5-tetrahydrodipicolinate + H2O + H(+). It functions in the pathway amino-acid biosynthesis; L-lysine biosynthesis via DAP pathway; (S)-tetrahydrodipicolinate from L-aspartate: step 3/4. Catalyzes the condensation of (S)-aspartate-beta-semialdehyde [(S)-ASA] and pyruvate to 4-hydroxy-tetrahydrodipicolinate (HTPA). In Karelsulcia muelleri (strain GWSS) (Sulcia muelleri), this protein is 4-hydroxy-tetrahydrodipicolinate synthase.